Reading from the N-terminus, the 439-residue chain is Chitinase-like protein Idgf1 (439 aa).

Residues 1 to 20 (MRFQLFYILGLLSVTSLTHA) form the signal peptide. Residues 22-439 (SNLICYYDSN…ILRSIKYFMG (418 aa)) form the GH18 domain. The cysteines at positions 26 and 53 are disulfide-linked. 3 N-linked (GlcNAc...) asparagine glycosylation sites follow: Asn122, Asn218, and Asn346. Residues Cys340 and Cys423 are joined by a disulfide bond.

The protein belongs to the glycosyl hydrolase 18 family. IDGF subfamily. As to expression, primarily expressed in yolk cells and fat body. In larvae, it is expressed in large salivary gland cells and weakly expressed in imaginal disks. Less expressed than Idgf2 and Idgf4.

It localises to the secreted. Cooperates with insulin-like peptides to stimulate the proliferation, polarization and motility of imaginal disk cells. May act by stabilizing the binding of insulin-like peptides to its receptor through a simultaneous interaction with both molecules to form a multiprotein signaling complex. This chain is Chitinase-like protein Idgf1 (Idgf1), found in Drosophila melanogaster (Fruit fly).